We begin with the raw amino-acid sequence, 504 residues long: uncharacterized protein (504 aa).

The tract at residues Gly-431–Glu-483 is disordered.

This sequence belongs to the CBF/MAK21 family.

This is an uncharacterized protein from Caenorhabditis elegans.